A 542-amino-acid chain; its full sequence is Cytochrome P450 734A6 (542 aa).

Residues 2–22 form a helical membrane-spanning segment; that stretch reads GWWGWAAAAAAAAAWVAVKVL. Cys474 contributes to the heme binding site.

The protein belongs to the cytochrome P450 family. Requires heme as cofactor. Highly expressed in leaf sheaths. Expressed in roots, shoot apex, leaf blades, internodes and panicles.

The protein resides in the membrane. In terms of biological role, cytochrome P450 involved in brassinosteroids (BRs) inactivation and regulation of BRs homeostasis. Is a multifunctional and multisubstrate enzyme that controls the endogenous bioactive BR content both by direct inactivation of castasterone (CS) and by decreasing the levels of BR precursors. Catalyzes the oxidation of carbon 22 hydroxylated BR intermediates to produce C26 oxidized metabolites. This Oryza sativa subsp. japonica (Rice) protein is Cytochrome P450 734A6 (CYP734A6).